The following is a 395-amino-acid chain: Chaperone protein DnaJ (395 aa).

The region spanning 4-69 (DYYEVLGLSR…DKRRRYDQFG (66 aa)) is the J domain. The segment at 151–232 (GVEKTLKIKK…CYGEGIKQGE (82 aa)) adopts a CR-type zinc-finger fold. The Zn(2+) site is built by Cys-164, Cys-167, Cys-180, Cys-183, Cys-206, Cys-209, Cys-220, and Cys-223. CXXCXGXG motif repeat units follow at residues 164 to 171 (CTECNGTG), 180 to 187 (CPTCHGSG), 206 to 213 (CPTCGGEG), and 220 to 227 (CVSCYGEG).

This sequence belongs to the DnaJ family. As to quaternary structure, homodimer. Requires Zn(2+) as cofactor.

It is found in the cytoplasm. Participates actively in the response to hyperosmotic and heat shock by preventing the aggregation of stress-denatured proteins and by disaggregating proteins, also in an autonomous, DnaK-independent fashion. Unfolded proteins bind initially to DnaJ; upon interaction with the DnaJ-bound protein, DnaK hydrolyzes its bound ATP, resulting in the formation of a stable complex. GrpE releases ADP from DnaK; ATP binding to DnaK triggers the release of the substrate protein, thus completing the reaction cycle. Several rounds of ATP-dependent interactions between DnaJ, DnaK and GrpE are required for fully efficient folding. Also involved, together with DnaK and GrpE, in the DNA replication of plasmids through activation of initiation proteins. In Chlorobium phaeobacteroides (strain DSM 266 / SMG 266 / 2430), this protein is Chaperone protein DnaJ.